The sequence spans 294 residues: Ribosomal protein L11 methyltransferase (294 aa).

Residues Thr-145, Gly-167, Asp-189, and Asn-230 each coordinate S-adenosyl-L-methionine.

It belongs to the methyltransferase superfamily. PrmA family.

It localises to the cytoplasm. The enzyme catalyses L-lysyl-[protein] + 3 S-adenosyl-L-methionine = N(6),N(6),N(6)-trimethyl-L-lysyl-[protein] + 3 S-adenosyl-L-homocysteine + 3 H(+). Methylates ribosomal protein L11. The protein is Ribosomal protein L11 methyltransferase of Alkalilimnicola ehrlichii (strain ATCC BAA-1101 / DSM 17681 / MLHE-1).